Here is a 160-residue protein sequence, read N- to C-terminus: Thy-1 membrane glycoprotein (160 aa).

An N-terminal signal peptide occupies residues 1-19 (MNPTVSIAVILTVLQAAHC). Glutamine 20 is modified (pyrrolidone carboxylic acid). Residues 20 to 120 (QMIRDLSACL…YTGNQIKNIT (101 aa)) form the Ig-like V-type domain. 2 disulfide bridges follow: cysteine 28-cysteine 129 and cysteine 38-cysteine 103. N-linked (GlcNAc...) asparagine glycosylation is found at asparagine 42, asparagine 78, and asparagine 118. Cysteine 129 is lipidated: GPI-anchor amidated cysteine. The propeptide at 130-160 (VRLSLLIQNTSWLLLLLLSLPLLQAVDFVSL) is removed in mature form. An N-linked (GlcNAc...) asparagine glycan is attached at asparagine 138.

The N-terminus is blocked. As to expression, forebrain, cerebellum and tectum.

The protein resides in the cell membrane. Functionally, may play a role in cell-cell or cell-ligand interactions during synaptogenesis and other events in the brain. This chain is Thy-1 membrane glycoprotein (THY1), found in Gallus gallus (Chicken).